The sequence spans 225 residues: 2-C-methyl-D-erythritol 4-phosphate cytidylyltransferase (225 aa).

This sequence belongs to the IspD/TarI cytidylyltransferase family. IspD subfamily.

It carries out the reaction 2-C-methyl-D-erythritol 4-phosphate + CTP + H(+) = 4-CDP-2-C-methyl-D-erythritol + diphosphate. It participates in isoprenoid biosynthesis; isopentenyl diphosphate biosynthesis via DXP pathway; isopentenyl diphosphate from 1-deoxy-D-xylulose 5-phosphate: step 2/6. Catalyzes the formation of 4-diphosphocytidyl-2-C-methyl-D-erythritol from CTP and 2-C-methyl-D-erythritol 4-phosphate (MEP). This Cereibacter sphaeroides (strain ATCC 17029 / ATH 2.4.9) (Rhodobacter sphaeroides) protein is 2-C-methyl-D-erythritol 4-phosphate cytidylyltransferase.